Reading from the N-terminus, the 182-residue chain is Small ribosomal subunit protein uS9 (182 aa).

The protein belongs to the universal ribosomal protein uS9 family.

In Corynebacterium efficiens (strain DSM 44549 / YS-314 / AJ 12310 / JCM 11189 / NBRC 100395), this protein is Small ribosomal subunit protein uS9.